The primary structure comprises 104 residues: Protamine-2 (104 aa).

A disordered region spans residues Met-1 to Arg-91. Ser-8, Ser-10, and Ser-33 each carry phosphoserine. The segment covering Ser-33 to Glu-44 has biased composition (basic and acidic residues). Residues Arg-45–Arg-91 show a composition bias toward basic residues.

It belongs to the protamine P2 family. In terms of assembly, interacts with TDRP. Post-translationally, proteolytic processing into mature chains is required for histone eviction during spermatogenesis. Transition proteins (TNP1 and TNP2) are required for processing. As to expression, testis.

Its subcellular location is the nucleus. The protein localises to the chromosome. In terms of biological role, protamines substitute for histones in the chromatin of sperm during the haploid phase of spermatogenesis. They compact sperm DNA into a highly condensed, stable and inactive complex. This Rattus norvegicus (Rat) protein is Protamine-2 (Prm2).